The primary structure comprises 126 residues: Precursor of CEP2 (126 aa).

A signal peptide spans 1–19 (MKLFIITVVTILTISRVFD). Positions 20-80 (KTPATTEARK…ENNLKNRFIN (61 aa)) are excised as a propeptide. Hydroxyproline is present on residues proline 84 and proline 87. Positions 96–105 (PRVLNNKFTN) are excised as a propeptide. Residues proline 109, proline 112, and proline 116 each carry the hydroxyproline modification. Positions 121-126 (PGVVNV) are excised as a propeptide.

Belongs to the C-terminally encoded plant signaling peptide (CEP) family. In terms of assembly, interacts with CEP receptors (e.g. CEPR1 and CEPR2). In terms of processing, the mature small signaling peptide is generated by proteolytic processing of the longer precursor. Mostly expressed in roots. Present in cotyledons, shoot apical meristem (SAM), leaves, inflorescence stems and flowers.

It localises to the secreted. The protein localises to the extracellular space. The protein resides in the apoplast. Extracellular signaling peptide that represses primary root growth rate. Negatively regulates the number of leaves and flowering, and modulates leaf morphology. Regulates systemic nitrogen (N)-demand signaling. Mediates up-regulation of genes involved in N uptake and assimilation pathways. The chain is Precursor of CEP2 from Arabidopsis thaliana (Mouse-ear cress).